The sequence spans 283 residues: BTB/POZ domain-containing protein KCTD15 (283 aa).

The tract at residues 1-33 is disordered; the sequence is MPHRKERPSGSSLHAHGSTGTAEGGSMSRLSLT. A phosphoserine mark is found at serine 31, serine 35, and serine 38. The BTB domain maps to 56-126; it reads APVHIDVGGH…LRTSKLLLPD (71 aa).

In terms of assembly, forms oligomers, predominantly homopentamers. Interacts with KCTD1, probably forming heteropentamers depending on its abundance in a cell-type dependent manner. Interacts with TFAP2A; this interaction inhibits TFAP2A transcriptional activation.

Its subcellular location is the nucleus. Functionally, during embryonic development, interferes with neural crest formation. Inhibits AP2 transcriptional activity by interaction with its activation domain. This chain is BTB/POZ domain-containing protein KCTD15 (KCTD15), found in Bos taurus (Bovine).